The chain runs to 646 residues: Microtubule-associated protein 9 (646 aa).

Position 2 is an N-acetylserine (serine 2). Tyrosine 12 carries the post-translational modification Phosphotyrosine. 6 disordered regions span residues 75–226 (DFHI…QTEE), 242–418 (SLTS…LEPD), 491–511 (RLEEKNKKKTEEENAMRKGEA), 531–554 (RREKEYERAKKQKEEEAVAEKKKD), 570–597 (LKQKEKEKINERRKEELKRAEKKDKDKQ), and 609–646 (KERQERIERKQKKRHSFLESETHPPWSPPSRTAPSKVF). Polar residues-rich tracts occupy residues 105–119 (ALDSSTPGSEGSSPD) and 157–167 (RSTSSGETSSG). Residues 188–204 (SHTEEGVRPGVDKEHSI) show a composition bias toward basic and acidic residues. Composition is skewed to polar residues over residues 205 to 222 (SEASAPTPSLPRQNGTEL), 280 to 291 (LLSNENEGSSVL), and 330 to 340 (PLLSTSPSVIT). Basic and acidic residues predominate over residues 346 to 357 (EPAKKANEDRNT). Over residues 386-398 (TKRSPSAATSSHY) the composition is skewed to polar residues. Over residues 405 to 418 (LDQKQPRKQSLEPD) the composition is skewed to basic and acidic residues. The stretch at 442–596 (MHRIKRIESE…KRAEKKDKDK (155 aa)) forms a coiled coil. Polar residues predominate over residues 637 to 646 (PSRTAPSKVF).

Binds to purified microtubules via its C-terminus.

It localises to the cytoplasm. The protein resides in the cytoskeleton. Its subcellular location is the spindle. In terms of biological role, involved in organization of the bipolar mitotic spindle. Required for bipolar spindle assembly, mitosis progression and cytokinesis. May act by stabilizing interphase microtubules. This is Microtubule-associated protein 9 (Map9) from Mus musculus (Mouse).